Here is a 142-residue protein sequence, read N- to C-terminus: Large ribosomal subunit protein uL11 (142 aa).

This sequence belongs to the universal ribosomal protein uL11 family. As to quaternary structure, part of the ribosomal stalk of the 50S ribosomal subunit. Interacts with L10 and the large rRNA to form the base of the stalk. L10 forms an elongated spine to which L12 dimers bind in a sequential fashion forming a multimeric L10(L12)X complex. Post-translationally, one or more lysine residues are methylated.

Forms part of the ribosomal stalk which helps the ribosome interact with GTP-bound translation factors. This is Large ribosomal subunit protein uL11 from Haemophilus influenzae (strain 86-028NP).